A 630-amino-acid chain; its full sequence is Triacylglycerol lipase ptl2 (630 aa).

Residues 251 to 442 (LCLSGGASFA…RTDIPLSELR (192 aa)) enclose the PNPLA domain. The short motif at 282–286 (GTSGG) is the GXSXG element. Catalysis depends on Ser-284, which acts as the Nucleophile. Asp-429 functions as the Proton acceptor in the catalytic mechanism.

It belongs to the PLPL family.

Its subcellular location is the lipid droplet. It carries out the reaction a triacylglycerol + H2O = a diacylglycerol + a fatty acid + H(+). Lipid particle-localized triacylglycerol (TAG) lipase. The lipid droplet/particle is a lipid storage compartment which serves as a depot of energy and building blocks for membrane lipid biosynthesis. Involved in the mobilization of the non-polar storage lipids triacylglycerols (TAGs) from lipid particles by hydrolysis of TAGs, releasing and supplying specific fatty acids to the appropriate metabolic pathways. This Schizosaccharomyces pombe (strain 972 / ATCC 24843) (Fission yeast) protein is Triacylglycerol lipase ptl2 (ptl2).